Consider the following 432-residue polypeptide: Fibrinogen gamma chain (432 aa).

Positions 1–24 (MGRIGTPVFLAFLSALTCSLQVHA) are cleaved as a signal peptide. The Fibrinogen C-terminal domain occupies 169 to 412 (KISPITGKDC…MTTMKLLPMG (244 aa)). Cysteine 178 and cysteine 207 are joined by a disulfide. N-linked (GlcNAc...) asparagine glycosylation is present at asparagine 227. Residues aspartate 340, aspartate 342, tyrosine 344, and glycine 346 each contribute to the Ca(2+) site. Cysteine 348 and cysteine 361 are joined by a disulfide. Residues 413 to 432 (RDLSGHGGQQQSKGNSRGDN) are disordered. Residues 421-432 (QQQSKGNSRGDN) show a composition bias toward polar residues.

In terms of assembly, heterohexamer; disulfide linked. Contains 2 sets of 3 non-identical chains (alpha, beta and gamma). The 2 heterotrimers are in head to head conformation with the N-termini in a small central domain. In terms of processing, conversion of fibrinogen to fibrin is triggered by thrombin, which cleaves fibrinopeptides A and B from alpha and beta chains, and thus exposes the N-terminal polymerization sites responsible for the formation of the soft clot. The soft clot is converted into the hard clot by factor XIIIA which catalyzes the epsilon-(gamma-glutamyl)lysine cross-linking between gamma chains (stronger) and between alpha chains (weaker) of different monomers.

Its subcellular location is the secreted. In terms of biological role, together with fibrinogen alpha (FGA) and fibrinogen beta (FGB), polymerizes to form an insoluble fibrin matrix. Has a major function in hemostasis as one of the primary components of blood clots. The sequence is that of Fibrinogen gamma chain (FGG) from Petromyzon marinus (Sea lamprey).